We begin with the raw amino-acid sequence, 972 residues long: Peptidyl-glycine alpha-amidating monooxygenase (972 aa).

Residues 1–20 form the signal peptide; it reads MAGFRSLLVLLLVFPSGCVG. Residues 1–494 are peptidylglycine alpha-hydroxylating monooxygenase; it reads MAGFRSLLVL…EGTWEPEHTG (494 aa). The propeptide occupies 21–30; it reads FRSPLSVFKR. Topologically, residues 31–873 are intragranular; that stretch reads FKETTRSFSN…VPAVLITTLL (843 aa). 5 disulfide bridges follow: C42–C181, C76–C121, C109–C126, C222–C329, and C288–C310. Residues H102 and H103 each coordinate Cu(2+). Residues H167, H237, H239, and M309 each contribute to the Cu(2+) site. A peptidyl-alpha-hydroxyglycine alpha-amidating lyase region spans residues 495–817; that stretch reads DFHVEEALDW…STEKMEHRSV (323 aa). 4 NHL repeats span residues 498 to 541, 567 to 608, 617 to 662, and 670 to 714; these read VEEA…NSFD, AAVL…LDPK, LGRS…FSPS, and GEAS…FKTD. Residue V517 participates in Ca(2+) binding. Residue R530 coordinates a protein. A Zn(2+)-binding site is contributed by H582. Ca(2+) is bound at residue L584. C631 and C652 form a disulfide bridge. Residue Y651 coordinates a protein. H687 provides a ligand contact to Zn(2+). Cysteines 699 and 710 form a disulfide. An a protein-binding site is contributed by R703. N762 is a glycosylation site (N-linked (GlcNAc...) asparagine). The stretch at 766–809 is one NHL 5 repeat; it reads GEIIDVFKPVRKHFDMPHDIAASEDGTVYVGDAHTNTVWKFTST. Position 783 (H783) interacts with Zn(2+). D784 is a binding site for Ca(2+). Residues 874 to 897 form a helical membrane-spanning segment; the sequence is VIPVVVLLAIALFIRWKKSRAFGD. Over 898 to 972 the chain is Cytoplasmic; that stretch reads SERKLEASSG…APPPAPAPSS (75 aa). An interaction with RASSF9 region spans residues 925–942; sequence NFFASRKGYSRKGFDRLS. Phosphoserine occurs at positions 929 and 942. The disordered stretch occupies residues 937–972; sequence GFDRLSTEGSDQEKDEDASESEEEYSAPPPAPAPSS. Phosphothreonine is present on T943. S946 is subject to Phosphoserine; by UHMK1. Acidic residues predominate over residues 949 to 961; it reads EKDEDASESEEEY. S957 is modified (phosphoserine). The span at 963-972 shows a compositional bias: pro residues; it reads APPPAPAPSS.

It in the C-terminal section; belongs to the peptidyl-alpha-hydroxyglycine alpha-amidating lyase family. The protein in the N-terminal section; belongs to the copper type II ascorbate-dependent monooxygenase family. In terms of assembly, monomer. Interacts with RASSF9. Requires Zn(2+) as cofactor. The cofactor is Cu(2+).

The protein localises to the cytoplasmic vesicle. Its subcellular location is the secretory vesicle membrane. The catalysed reaction is a [peptide]-C-terminal glycine + 2 L-ascorbate + O2 = a [peptide]-C-terminal (2S)-2-hydroxyglycine + 2 monodehydro-L-ascorbate radical + H2O. It catalyses the reaction a [peptide]-C-terminal (2S)-2-hydroxyglycine = a [peptide]-C-terminal amide + glyoxylate. The enzyme catalyses N-dodecanoylglycine + 2 L-ascorbate + O2 = N-dodecanoyl-(2S)-hydroxyglycine + 2 monodehydro-L-ascorbate radical + H2O. It carries out the reaction N-dodecanoyl-(2S)-hydroxyglycine = dodecanamide + glyoxylate. The catalysed reaction is N-(9Z,12Z,15Z)-octadecatrienoylglycine + 2 L-ascorbate + O2 = N-(9Z,12Z,15Z)-octadecatrienoyl-(2S)-hydroxyglycine + 2 monodehydro-L-ascorbate radical + H2O. It catalyses the reaction N-(9Z,12Z,15Z)-octadecatrienoyl-(2S)-hydroxyglycine = (9Z,12Z,15Z)-octadecatrienamide + glyoxylate. The enzyme catalyses N-(9Z-octadecenoyl)glycine + 2 L-ascorbate + O2 = N-(9Z-octadecenoyl)-(2S)-hydroxyglycine + 2 monodehydro-L-ascorbate radical + H2O. It carries out the reaction N-(9Z-octadecenoyl)-(2S)-hydroxyglycine = (9Z)-octadecenamide + glyoxylate. The catalysed reaction is N-tetradecanoylglycine + 2 L-ascorbate + O2 = N-tetradecanoyl-(2S)-hydroxyglycine + 2 monodehydro-L-ascorbate radical + H2O. It catalyses the reaction N-tetradecanoyl-(2S)-hydroxyglycine = tetradecamide + glyoxylate. The enzyme catalyses N-decanoylglycine + 2 L-ascorbate + O2 = N-decanoyl-(2S)-hydroxyglycine + 2 monodehydro-L-ascorbate radical + H2O. It carries out the reaction N-decanoyl-(2S)-hydroxyglycine = decanamide + glyoxylate. The catalysed reaction is N-octanoylglycine + 2 L-ascorbate + O2 = N-octanoyl-(2S)-hydroxyglycine + 2 monodehydro-L-ascorbate radical + H2O. It catalyses the reaction N-octanoyl-(2S)-hydroxyglycine = octanamide + glyoxylate. With respect to regulation, PAM activity is inhibited by EDTA, phenylglyoxal and diethyl pyrocarbonate. PAL activity is stimulated by cadmium and inhibited by mercury. In terms of biological role, bifunctional enzyme that catalyzes amidation of the C-terminus of proteins. Alpha-amidation is present at the C-terminus of many endocrine hormones and neuropeptides and is required for their activity. C-terminal amidation also takes place in response to protein fragmentation triggered by oxidative stress, promoting degradation of amidated protein fragments by the proteasome. Alpha-amidation involves two sequential reactions, both of which are catalyzed by separate catalytic domains of the enzyme. The first step, catalyzed by peptidyl alpha-hydroxylating monooxygenase (PHM) domain, is the copper-, ascorbate-, and O2- dependent stereospecific hydroxylation (with S stereochemistry) at the alpha-carbon (C-alpha) of the C-terminal glycine of the peptidylglycine substrate. The second step, catalyzed by the peptidylglycine amidoglycolate lyase (PAL) domain, is the zinc-dependent cleavage of the N-C-alpha bond, producing the alpha-amidated peptide and glyoxylate. Similarly, catalyzes the two-step conversion of an N-fatty acylglycine to a primary fatty acid amide and glyoxylate. In Bos taurus (Bovine), this protein is Peptidyl-glycine alpha-amidating monooxygenase (PAM).